Here is a 167-residue protein sequence, read N- to C-terminus: uncharacterized protein (167 aa).

Belongs to the A.longa ORF167/ORF288 family.

It is found in the plastid. This is an uncharacterized protein from Euglena longa (Euglenophycean alga).